The sequence spans 478 residues: UDP-N-acetylmuramate--L-alanine ligase (478 aa).

112-118 contributes to the ATP binding site; it reads GTHGKTT.

This sequence belongs to the MurCDEF family.

Its subcellular location is the cytoplasm. The catalysed reaction is UDP-N-acetyl-alpha-D-muramate + L-alanine + ATP = UDP-N-acetyl-alpha-D-muramoyl-L-alanine + ADP + phosphate + H(+). It participates in cell wall biogenesis; peptidoglycan biosynthesis. In terms of biological role, cell wall formation. In Polynucleobacter asymbioticus (strain DSM 18221 / CIP 109841 / QLW-P1DMWA-1) (Polynucleobacter necessarius subsp. asymbioticus), this protein is UDP-N-acetylmuramate--L-alanine ligase.